Here is a 191-residue protein sequence, read N- to C-terminus: uncharacterized protein (191 aa).

Residues 6-66 (GLTQKMIVDA…ELAVRGLTKL (61 aa)) enclose the HTH tetR-type domain. The H-T-H motif DNA-binding region spans 29-48 (SLAALSKKMNVRPPSLYNHI).

This is an uncharacterized protein from Bacillus subtilis (strain 168).